Reading from the N-terminus, the 445-residue chain is RNA-binding protein asd-2 (445 aa).

The tract at residues 22–63 is disordered; that stretch reads TVIPPPPNDSGHEFIGPSSGPPQVTITPSGVQSGSANGVSTS. Residues 42-63 are compositionally biased toward polar residues; the sequence is PPQVTITPSGVQSGSANGVSTS. Positions 71–128 are qua1 domain; that stretch reads EYLSQLLKDKKQLAAFPNVFHHLERLADEEINKVRVVLFQCEFSKESAPLPDAEGDST. Positions 145–171 constitute a KH domain; the sequence is NFVGRILGPRGMTAKQLEQETGCKIMV. Residues 230–253 form a qua2 domain; involved in RNA binding region; the sequence is APEGEDDLKRKQLMELAIINGTYR.

As to quaternary structure, interacts with sup-12; in the presence of RNA, but with weak affinity in the absence of RNA. As to expression, isoform b: Expressed in the hypodermis and pharyngeal muscles. Isoform c: Expressed in body wall muscles and phayngeal muscles.

The protein resides in the nucleus. RNA-binding protein that binds to the 5'-NACUAAY-N(1,20)-UAAY-3' consensus sequence in pre-mRNA introns to promote alternative splicing. Required for mutually exclusive alternative splicing where it modulates the switch between mutually exclusive exons during pre-mRNA maturation. Involved in muscle-specific gene expression regulating the alternative splicing of genes such as let-2 and unc-60 to ensure that their respective isoforms are expressed in muscle. Promotes the removal of intron 10 from let-2 pre-mRNA to allow for the exclusive expression of the muscle-specific let-2 isoform (as opposed to the non-muscle-specific isoform expressed in embryos) in body wall muscles during late larval and adult stages of development. Binds cooperatively with RNA-binding protein sup-12 to intron 1A of the unc-60 pre-mRNA to promote alternative splicing and expression of the muscle specific isoform of unc-60. This is RNA-binding protein asd-2 from Caenorhabditis elegans.